A 195-amino-acid polypeptide reads, in one-letter code: MGHYSHSDIEEAVKSAKKEGLKDYLYQEPHGKKRSHKKSHRTHKKSRSHKKSYCSHKKSRSHKKSFCSHKKSRSHKKSYCSHKKSRSHKKSYRSHKKSRSYKKSYRSYKKSRSYKKSCRSYKKSRSYKKSYCSHKKKSRSYKKSCRTHKKSYRSHKKYYKKPHHHCDDYKRHDDYDSKKEYWKDGNCWVVKKKYK.

The segment covering 1–22 (MGHYSHSDIEEAVKSAKKEGLK) has biased composition (basic and acidic residues). A disordered region spans residues 1-163 (MGHYSHSDIE…SHKKYYKKPH (163 aa)). The segment covering 31–163 (GKKRSHKKSH…SHKKYYKKPH (133 aa)) has biased composition (basic residues). Repeat copies occupy residues 36-48 (HKKS…KSRS), 49-61 (HKKS…KSRS), 62-74 (HKKS…KSRS), 75-87 (HKKS…KSRS), 88-100 (HKKS…KSRS), 101-113 (YKKS…KSRS), and 114-126 (YKKS…KSRS). The segment at 36 to 154 (HKKSHRTHKK…CRTHKKSYRS (119 aa)) is 9 X 13 AA approximate tandem repeats of [HY]-K-K-S-[HYFC]-[RC]-[TS]-[HY]-K-K-S-R-S. Residues 127–140 (YKKSYCSHKKKSRS) form an 8; approximate repeat. A 9; approximate repeat occupies 141-154 (YKKSCRTHKKSYRS).

Homodimer.

May be a morphogenetic protein that is required for the incorporation of protein CotB into the spore coat. This chain is Spore coat protein G (cotG), found in Bacillus subtilis (strain 168).